Here is a 60-residue protein sequence, read N- to C-terminus: Large ribosomal subunit protein bL32 (60 aa).

The span at 1 to 19 (MGVPKRKTSKGRRDKRRAH) shows a compositional bias: basic residues. Residues 1-20 (MGVPKRKTSKGRRDKRRAHL) are disordered.

This sequence belongs to the bacterial ribosomal protein bL32 family.

The sequence is that of Large ribosomal subunit protein bL32 from Syntrophobacter fumaroxidans (strain DSM 10017 / MPOB).